A 571-amino-acid chain; its full sequence is Proline--tRNA ligase (571 aa).

The protein belongs to the class-II aminoacyl-tRNA synthetase family. ProS type 1 subfamily. As to quaternary structure, homodimer.

It localises to the cytoplasm. It carries out the reaction tRNA(Pro) + L-proline + ATP = L-prolyl-tRNA(Pro) + AMP + diphosphate. Catalyzes the attachment of proline to tRNA(Pro) in a two-step reaction: proline is first activated by ATP to form Pro-AMP and then transferred to the acceptor end of tRNA(Pro). As ProRS can inadvertently accommodate and process non-cognate amino acids such as alanine and cysteine, to avoid such errors it has two additional distinct editing activities against alanine. One activity is designated as 'pretransfer' editing and involves the tRNA(Pro)-independent hydrolysis of activated Ala-AMP. The other activity is designated 'posttransfer' editing and involves deacylation of mischarged Ala-tRNA(Pro). The misacylated Cys-tRNA(Pro) is not edited by ProRS. This is Proline--tRNA ligase from Syntrophotalea carbinolica (strain DSM 2380 / NBRC 103641 / GraBd1) (Pelobacter carbinolicus).